The following is a 421-amino-acid chain: UDP-N-acetylglucosamine 1-carboxyvinyltransferase (421 aa).

23–24 (KN) serves as a coordination point for phosphoenolpyruvate. Arg-92 serves as a coordination point for UDP-N-acetyl-alpha-D-glucosamine. Cys-116 functions as the Proton donor in the catalytic mechanism. Cys-116 bears the 2-(S-cysteinyl)pyruvic acid O-phosphothioketal mark. UDP-N-acetyl-alpha-D-glucosamine is bound by residues 121 to 125 (RPVDL), 161 to 164 (KVSV), Asp-306, and Ile-328.

This sequence belongs to the EPSP synthase family. MurA subfamily.

Its subcellular location is the cytoplasm. The catalysed reaction is phosphoenolpyruvate + UDP-N-acetyl-alpha-D-glucosamine = UDP-N-acetyl-3-O-(1-carboxyvinyl)-alpha-D-glucosamine + phosphate. It functions in the pathway cell wall biogenesis; peptidoglycan biosynthesis. Cell wall formation. Adds enolpyruvyl to UDP-N-acetylglucosamine. This Vibrio vulnificus (strain CMCP6) protein is UDP-N-acetylglucosamine 1-carboxyvinyltransferase.